A 285-amino-acid chain; its full sequence is (3S)-malyl-CoA thioesterase (285 aa).

Substrate-binding residues include Arg-70 and Glu-122. Mg(2+) is bound by residues Glu-122 and Asp-148.

This sequence belongs to the HpcH/HpaI aldolase family. Homodimer or homotrimer. Mg(2+) is required as a cofactor.

It carries out the reaction (S)-malyl-CoA + H2O = (S)-malate + CoA + H(+). Catalyzes the hydrolysis of (3S)-malyl-CoA to (3S)-malate and free CoA. Inactive towards beta-methylmalyl-CoA and other CoA esters. In Cereibacter sphaeroides (strain ATCC 17029 / ATH 2.4.9) (Rhodobacter sphaeroides), this protein is (3S)-malyl-CoA thioesterase.